The sequence spans 425 residues: Histidine--tRNA ligase (425 aa).

This sequence belongs to the class-II aminoacyl-tRNA synthetase family. In terms of assembly, homodimer.

The protein localises to the cytoplasm. The enzyme catalyses tRNA(His) + L-histidine + ATP = L-histidyl-tRNA(His) + AMP + diphosphate + H(+). The sequence is that of Histidine--tRNA ligase from Tolumonas auensis (strain DSM 9187 / NBRC 110442 / TA 4).